The primary structure comprises 352 residues: Sporozoite surface protein P36 (352 aa).

The first 29 residues, 1-29 (MKQYEFARHINTYFSVAQNMLFSIFLYYA), serve as a signal peptide directing secretion. 6-Cys domains are found at residues 53–199 (YMCI…IKKA) and 210–351 (YIKG…STKE). Cys57 and Cys90 are disulfide-bonded. Asn89, Asn97, Asn111, Asn156, and Asn160 each carry an N-linked (GlcNAc...) asparagine glycan. Cystine bridges form between Cys104-Cys179, Cys122-Cys177, Cys214-Cys238, Cys252-Cys333, and Cys269-Cys331. Asn254 carries N-linked (GlcNAc...) asparagine glycosylation.

It localises to the cell membrane. It is found in the cell surface. Its function is as follows. Involved in sporozoite infection of hepatocytes and replication therein. The polypeptide is Sporozoite surface protein P36 (PBS36) (Plasmodium berghei (strain Anka)).